The chain runs to 548 residues: Chaperonin GroEL (548 aa).

Residues 30–33 (TLGP), lysine 51, 87–91 (DGTTT), glycine 415, 479–481 (NAA), and aspartate 495 contribute to the ATP site.

This sequence belongs to the chaperonin (HSP60) family. In terms of assembly, forms a cylinder of 14 subunits composed of two heptameric rings stacked back-to-back. Interacts with the co-chaperonin GroES.

The protein resides in the cytoplasm. It carries out the reaction ATP + H2O + a folded polypeptide = ADP + phosphate + an unfolded polypeptide.. Its function is as follows. Together with its co-chaperonin GroES, plays an essential role in assisting protein folding. The GroEL-GroES system forms a nano-cage that allows encapsulation of the non-native substrate proteins and provides a physical environment optimized to promote and accelerate protein folding. In Pseudomonas fluorescens (strain SBW25), this protein is Chaperonin GroEL.